The following is a 2729-amino-acid chain: 3-methylorcinaldehyde synthase (2729 aa).

Positions 99–238 (LPAALLIPLA…GTISNLTRQL (140 aa)) are N-terminal acylcarrier protein transacylase domain (SAT). Residues 361-373 (SLASTVDINSGNG) show a composition bias toward polar residues. The disordered stretch occupies residues 361 to 391 (SLASTVDINSGNGKTRRVKPADAQSSANSTH). A Ketosynthase family 3 (KS3) domain is found at 397 to 828 (DTDIAIVGMS…GSNASAVLVQ (432 aa)). Active-site for beta-ketoacyl synthase activity residues include C571, H706, and H748. The interval 942–1230 (FGGQVSCFVG…FLEAGTNSSV (289 aa)) is malonyl-CoA:ACP transacylase (MAT) domain. The For acyl/malonyl transferase activity role is filled by S1029. The segment at 1345-1479 (ETILTFHSSD…GTVAFKNPGD (135 aa)) is N-terminal hotdog fold. In terms of domain architecture, PKS/mFAS DH spans 1345–1669 (ETILTFHSSD…YVKIARPSME (325 aa)). The interval 1374–1665 (KQLLRGHMTL…LGIAYVKIAR (292 aa)) is product template (PT) domain. H1380 functions as the Proton acceptor; for dehydratase activity in the catalytic mechanism. The interval 1513–1669 (DEMLGNQSIY…YVKIARPSME (157 aa)) is C-terminal hotdog fold. D1575 (proton donor; for dehydratase activity) is an active-site residue. A compositionally biased stretch (low complexity) spans 1682-1701 (AGGKTTPQTATKPAAAPVVA). Residues 1682-1726 (AGGKTTPQTATKPAAAPVVADHTPRTTESASTVNGVNLDDRKPEG) form a disordered region. The segment covering 1707 to 1716 (TTESASTVNG) has biased composition (polar residues). The region spanning 1750-1824 (QDMIARVKAV…GLLQCVAGAL (75 aa)) is the Carrier domain. S1784 carries the O-(pantetheine 4'-phosphoryl)serine modification. The segment covering 1835–1868 (TLTASSDSGINSAKSSILSGTSTSTSTGTTDTGS) has biased composition (low complexity). Positions 1835 to 1874 (TLTASSDSGINSAKSSILSGTSTSTSTGTTDTGSDVGQSM) are disordered. A methyltransferase (C-MeT) domain region spans residues 2086 to 2254 (EINPLRIMET…GYVDWTEGMT (169 aa)). Residues 2344–2599 (ITGGTGGLGA…GWTPADYVAR (256 aa)) are reductase (R) domain.

It participates in secondary metabolite biosynthesis; terpenoid biosynthesis. Functionally, non-reducing polyketide synthase; part of the gene cluster that mediates the biosynthesis of xenovulene A, an unusual meroterpenoid that has potent inhibitory effects on the human gamma-aminobutyrate A (GABAA) benzodiazepine receptor. The first step of xenovulene A biosynthesis is the biosynthesis of 3-methylorcinaldehyde performed by the non-reducing polyketide synthase aspks1. The salicylate hydroxylase asL1 then catalyzes the oxidative dearomatization of 3-methylorcinaldehyde to yield a dearomatized hydroxycyclohexadione. The 2-oxoglutarate-dependent dioxygenase asL3 further catalyzes the oxidative ring expansion to provide the first tropolone metabolite. The cytochrome P450 monooxygenase asR2 allows the synthesis of tropolone hemiacetal. In parallel, a previously unrecognised class of terpene cyclase, asR6, produces alpha-humulene from farnesylpyrophosphate (FPP). The putative Diels-Alderase asR5 probably catalyzes the formation of the tropolone-humulene skeleton by linking humulene and the polyketide moiety. Oxidative-ring contractions catalyzed by asL4 and asL6 then processively remove carbon atoms from the polyketide to yield xenovulene A. This Sarocladium schorii (Acremonium strictum (strain IMI 501407)) protein is 3-methylorcinaldehyde synthase.